The chain runs to 57 residues: Large ribosomal subunit protein eL20 (57 aa).

Residues 1-10 (MSEFTVTGTF) show a composition bias toward polar residues. Residues 1–21 (MSEFTVTGTFESRDGNQPFEK) form a disordered region.

Belongs to the eukaryotic ribosomal protein eL20 family. In terms of assembly, part of the 50S ribosomal subunit. Binds 23S rRNA.

The sequence is that of Large ribosomal subunit protein eL20 from Halomicrobium mukohataei (strain ATCC 700874 / DSM 12286 / JCM 9738 / NCIMB 13541) (Haloarcula mukohataei).